The sequence spans 247 residues: Adenosylcobinamide-GDP ribazoletransferase (247 aa).

The next 6 helical transmembrane spans lie at 34–54, 59–79, 113–133, 138–158, 171–191, and 194–214; these read IVMFPFIGLILGGVSGLIFIL, CGIPLAALFCILALALLTGGF, GGLALIFVLLAKILVVSELAL, MLAALAAACAAGRGSAVLLMY, VFIGKVSGRQTCITLGLAVIV, and VLLPGMQGLAAMVVTLAAIFI.

The protein belongs to the CobS family. It depends on Mg(2+) as a cofactor.

The protein localises to the cell inner membrane. The catalysed reaction is alpha-ribazole + adenosylcob(III)inamide-GDP = adenosylcob(III)alamin + GMP + H(+). It catalyses the reaction alpha-ribazole 5'-phosphate + adenosylcob(III)inamide-GDP = adenosylcob(III)alamin 5'-phosphate + GMP + H(+). It participates in cofactor biosynthesis; adenosylcobalamin biosynthesis; adenosylcobalamin from cob(II)yrinate a,c-diamide: step 7/7. Its function is as follows. Joins adenosylcobinamide-GDP and alpha-ribazole to generate adenosylcobalamin (Ado-cobalamin). Also synthesizes adenosylcobalamin 5'-phosphate from adenosylcobinamide-GDP and alpha-ribazole 5'-phosphate. The chain is Adenosylcobinamide-GDP ribazoletransferase from Salmonella schwarzengrund (strain CVM19633).